The sequence spans 86 residues: Anti-adapter protein IraP (86 aa).

A coiled-coil region spans residues 1 to 47 (MKNLIAELLLKLAQKEEESKELVAQVEALEIIVTAMLRNMAQSEQQM).

The protein belongs to the IraP family. Interacts with RssB.

The protein localises to the cytoplasm. Its function is as follows. Inhibits RpoS proteolysis by regulating RssB activity, thereby increasing the stability of the sigma stress factor RpoS especially during phosphate and magnesium starvation, but also in stationary phase and during nitrogen starvation. Its effect on RpoS stability is due to its interaction with RssB, which probably blocks the interaction of RssB with RpoS, and the consequent delivery of the RssB-RpoS complex to the ClpXP protein degradation pathway. The chain is Anti-adapter protein IraP from Salmonella arizonae (strain ATCC BAA-731 / CDC346-86 / RSK2980).